The sequence spans 365 residues: Glutamate 5-kinase 1 (365 aa).

An ATP-binding site is contributed by Lys9. Substrate contacts are provided by Ser49, Asp136, and Asn148. ATP is bound by residues 168 to 169 (TD) and 210 to 216 (TGGMKSK). Positions 276–353 (SGEIIIDAGA…DELDFEKTFE (78 aa)) constitute a PUA domain.

The protein belongs to the glutamate 5-kinase family.

It is found in the cytoplasm. It carries out the reaction L-glutamate + ATP = L-glutamyl 5-phosphate + ADP. Its pathway is amino-acid biosynthesis; L-proline biosynthesis; L-glutamate 5-semialdehyde from L-glutamate: step 1/2. In terms of biological role, catalyzes the transfer of a phosphate group to glutamate to form L-glutamate 5-phosphate. The chain is Glutamate 5-kinase 1 from Bacillus subtilis (strain 168).